Here is a 4017-residue protein sequence, read N- to C-terminus: Hybrid PKS-NRPS synthetase cghG (4017 aa).

The region spanning 6 to 438 (QEPIAVIGMA…GTNAHAIIES (433 aa)) is the Ketosynthase family 3 (KS3) domain. Catalysis depends on for beta-ketoacyl synthase activity residues cysteine 179, histidine 318, and histidine 358. The tract at residues 549–869 (VFTGQGAQWP…GRNKNDVVEL (321 aa)) is malonyl-CoA:ACP transacylase (MAT) domain. The segment at 936-1072 (NPILGRRCVE…ATLHVRFHEP (137 aa)) is N-terminal hotdog fold. The PKS/mFAS DH domain occupies 936-1243 (NPILGRRCVE…VKPFAAATAR (308 aa)). Positions 937–1240 (PILGRRCVET…AVQVKPFAAA (304 aa)) are dehydratase (DH) domain. Histidine 969 (proton acceptor; for dehydratase activity) is an active-site residue. The interval 1087–1243 (LVKTDPGRLY…VKPFAAATAR (157 aa)) is C-terminal hotdog fold. Aspartate 1147 serves as the catalytic Proton donor; for dehydratase activity. Residues 1398 to 1585 (VANVWIARMV…GVDTHCPVEK (188 aa)) form a methyltransferase (MT) domain region. Residues 2127-2300 (TYFLVGLSGE…XXXXXXXXXX (174 aa)) form a ketoreductase (KR)domain region. Residues 2423-2499 (AVVQDSLTEN…SLAEEAMAKI (77 aa)) enclose the Carrier 1 domain. Serine 2458 is subject to O-(pantetheine 4'-phosphoryl)serine. Disordered regions lie at residues 2547–2606 (VSEA…LQHR) and 2613–2632 (WAGS…AQRH). Polar residues predominate over residues 2548–2578 (SEASGVSATTPSTRAETDASSSPALVSTPGT). Residues 2626-3020 (RRAAQRHETL…GDAMETEKLQ (395 aa)) are condensation. Residues 3053–3453 (EVIAQNPTAV…SGFLAIEGRI (401 aa)) are adenylation. The tract at residues 3567-3586 (PKTTTASTTADGTQPAQPLT) is disordered. Residues 3569–3579 (TTTASTTADGT) show a composition bias toward low complexity. In terms of domain architecture, Carrier 2 spans 3583–3661 (QPLTPTESRL…SMAALLDQAG (79 aa)). The segment at 3588-3658 (TESRLATLWA…ELGSMAALLD (71 aa)) is thiolation. O-(pantetheine 4'-phosphoryl)serine is present on serine 3621. The tract at residues 3696–3920 (VTGASGSLGK…DVGRLEDVAA (225 aa)) is reductase-like.

This sequence in the C-terminal section; belongs to the NRP synthetase family.

It catalyses the reaction (2S,4S)-4-hydroxy-4-methylglutamate + 8 malonyl-CoA + 3 S-adenosyl-L-methionine + ATP + 8 NADPH + 11 H(+) = (2S)-3-[(2S)-3,5-dioxo-4-[(2E,4R,6R,8E,10E,12E)-4,6,12-trimethyltetradeca-2,8,10,12-tetraenoyl]pyrrolidin-2-yl]-2-hydroxy-2-methylpropanoate + AMP + 3 S-adenosyl-L-homocysteine + 8 CO2 + diphosphate + 8 NADP(+) + 8 CoA + 6 H2O. The protein operates within secondary metabolite biosynthesis. Its function is as follows. Hybrid PKS-NRPS synthetase; part of the gene cluster that mediates the biosynthesis of the tetramic acid Sch210972, a potential anti-HIV fungal natural product that contains a decalin core. The PKS module of cghG together with the enoylreductase cghC catalyze the formation of the polyketide unit which is then conjugated to 4-hydroxyl-4-methyl glutamate (HMG) by the condensation domain of the cghG NRPS module. One unique structural feature of Sch210972 is the tetramic acid motif proposed to be derived from the non-proteinogenic amino acid HMG, by a Dieckmann-type condensation catalyzed by the reductase domain of cghG. The aldolase cghB catalyzes the aldol condensation of 2 molecules of pyruvic acid to yield the intermediate 4-hydroxyl-4-methyl-2-oxoglutarate (HMOG), which can then be stereoselectively transaminated by an unidentified enzyme to form HMG. The Diels-Alderase cghA then uses the Dieckmann product released by cghG as substrate and catalyzes the Diels-Alder cycloaddition to form the decalin ring of Sch210972. CghA also suppresses the nonenzymatic formation of the alternative stereoisomer. This Chaetomium globosum (strain ATCC 6205 / CBS 148.51 / DSM 1962 / NBRC 6347 / NRRL 1970) (Soil fungus) protein is Hybrid PKS-NRPS synthetase cghG.